Reading from the N-terminus, the 1330-residue chain is Paired amphipathic helix protein Sin3-like 3 (1330 aa).

2 consecutive PAH domains span residues 8–78 and 94–164; these read QKLT…LPKG and KRVE…LPDT. Positions 191–246 are enriched in basic and acidic residues; sequence IITPHPDHDYGTEHIDQDRERPIKKENKEHMRGTNKENEHRDARDFEPHSKKEQFL. The interval 191 to 281 is disordered; it reads IITPHPDHDY…VPSSSTYDEK (91 aa). Residues 262–277 are compositionally biased toward polar residues; sequence ISNQSKLSGAVPSSST. Residues 283-351 enclose the PAH 3 domain; sequence AMKSYSQDLA…DSFIEFLVQC (69 aa). 5 disordered regions span residues 373–401, 718–775, 789–808, 882–906, and 920–1002; these read GEGKYPQPSLDNDRDQEHKRDDGLRDRDH, NQNV…GRTS, KNVVTSDEKPESKQAVSIER, QEMAGTSKVEREEGELSPNGDFEED, and SKAN…EAEC. Residues 383 to 401 show a composition bias toward basic and acidic residues; that stretch reads DNDRDQEHKRDDGLRDRDH. Residues 723–734 are compositionally biased toward low complexity; that stretch reads SGSSSAGESEGS. Over residues 789 to 800 the composition is skewed to basic and acidic residues; the sequence is KNVVTSDEKPES. Residues 920-932 show a composition bias toward polar residues; that stretch reads SKANDSTGNNISG. 2 stretches are compositionally biased toward basic and acidic residues: residues 933–949 and 956–968; these read DRSREGEPSCLETRAEN and NAARSSEDSRNEY. The segment covering 980–989 has biased composition (acidic residues); sequence GGEDPEDDLD. The residue at position 996 (S996) is a Phosphoserine.

As to quaternary structure, interacts with ERF7 and the histone deacetylase HDA19.

Its subcellular location is the nucleus. Functionally, acts as a transcriptional repressor. Interacts with ERF7 to repress genes in abscisic acid and drought stress responses. The heterodimer represses transcription by tethering SNL3 to DNA. The sequence is that of Paired amphipathic helix protein Sin3-like 3 (SNL3) from Arabidopsis thaliana (Mouse-ear cress).